A 78-amino-acid chain; its full sequence is Large ribosomal subunit protein bL28 (78 aa).

Positions 1-20 (MSRVCQVTGKRPAVGNNRSH) are disordered.

It belongs to the bacterial ribosomal protein bL28 family.

This Actinobacillus pleuropneumoniae serotype 7 (strain AP76) protein is Large ribosomal subunit protein bL28.